Reading from the N-terminus, the 286-residue chain is Shikimate dehydrogenase (NADP(+)) (286 aa).

Shikimate is bound by residues 19–21 and Thr66; that span reads SFS. The active-site Proton acceptor is Lys70. Positions 91 and 107 each coordinate shikimate. NADP(+)-binding positions include 129–133 and Leu229; that span reads GSGGA. Tyr231 serves as a coordination point for shikimate. Gly252 lines the NADP(+) pocket.

The protein belongs to the shikimate dehydrogenase family. Homodimer.

It carries out the reaction shikimate + NADP(+) = 3-dehydroshikimate + NADPH + H(+). It participates in metabolic intermediate biosynthesis; chorismate biosynthesis; chorismate from D-erythrose 4-phosphate and phosphoenolpyruvate: step 4/7. In terms of biological role, involved in the biosynthesis of the chorismate, which leads to the biosynthesis of aromatic amino acids. Catalyzes the reversible NADPH linked reduction of 3-dehydroshikimate (DHSA) to yield shikimate (SA). The protein is Shikimate dehydrogenase (NADP(+)) of Prochlorococcus marinus (strain MIT 9301).